A 484-amino-acid chain; its full sequence is Pyruvate kinase (484 aa).

Residue arginine 33 coordinates substrate. The K(+) site is built by asparagine 35, serine 37, aspartate 67, and threonine 68. 35-38 (NFSH) lines the ATP pocket. ATP-binding residues include arginine 74 and lysine 155. Glutamate 221 lines the Mg(2+) pocket. 3 residues coordinate substrate: glycine 244, aspartate 245, and threonine 277. Position 245 (aspartate 245) interacts with Mg(2+).

This sequence belongs to the pyruvate kinase family. Homotetramer. Mg(2+) serves as cofactor. K(+) is required as a cofactor.

The enzyme catalyses pyruvate + ATP = phosphoenolpyruvate + ADP + H(+). It functions in the pathway carbohydrate degradation; glycolysis; pyruvate from D-glyceraldehyde 3-phosphate: step 5/5. In Chlamydia pneumoniae (Chlamydophila pneumoniae), this protein is Pyruvate kinase (pyk).